Reading from the N-terminus, the 942-residue chain is Isoleucine--tRNA ligase (942 aa).

The 'HIGH' region signature appears at 58–68 (PYANGDIHIGH). An L-isoleucyl-5'-AMP-binding site is contributed by glutamate 566. The short motif at 607–611 (KMSKS) is the 'KMSKS' region element. Lysine 610 lines the ATP pocket. Zn(2+) is bound by residues cysteine 905, cysteine 908, cysteine 925, and cysteine 928.

The protein belongs to the class-I aminoacyl-tRNA synthetase family. IleS type 1 subfamily. Monomer. Zn(2+) serves as cofactor.

It is found in the cytoplasm. The catalysed reaction is tRNA(Ile) + L-isoleucine + ATP = L-isoleucyl-tRNA(Ile) + AMP + diphosphate. Its function is as follows. Catalyzes the attachment of isoleucine to tRNA(Ile). As IleRS can inadvertently accommodate and process structurally similar amino acids such as valine, to avoid such errors it has two additional distinct tRNA(Ile)-dependent editing activities. One activity is designated as 'pretransfer' editing and involves the hydrolysis of activated Val-AMP. The other activity is designated 'posttransfer' editing and involves deacylation of mischarged Val-tRNA(Ile). This chain is Isoleucine--tRNA ligase, found in Pseudoalteromonas atlantica (strain T6c / ATCC BAA-1087).